The primary structure comprises 67 residues: Cold shock-like protein CspE (67 aa).

Residues 5–64 enclose the CSD domain; that stretch reads GKVKWFNSEKGFGFIEVEGGNDVFVHFSAITGDGFKSLDEGQEVSFEVEDGNRGPQAKNV.

As to quaternary structure, homodimer.

Its subcellular location is the cytoplasm. In terms of biological role, can bind to ATTGG and CCAAT motifs (Y-box motifs) of single-stranded oligonucleotides. In Bacillus anthracis, this protein is Cold shock-like protein CspE (cspE).